A 294-amino-acid chain; its full sequence is Phosphate import ATP-binding protein PstB (294 aa).

The segment covering Met1–Asn18 has biased composition (polar residues). The tract at residues Met1–Ser24 is disordered. An ABC transporter domain is found at Leu48–Ile289. Gly80–Ser87 contributes to the ATP binding site.

The protein belongs to the ABC transporter superfamily. Phosphate importer (TC 3.A.1.7) family. In terms of assembly, the complex is composed of two ATP-binding proteins (PstB), two transmembrane proteins (PstC and PstA) and a solute-binding protein (PstS).

The protein localises to the cell inner membrane. It catalyses the reaction phosphate(out) + ATP + H2O = ADP + 2 phosphate(in) + H(+). Functionally, part of the ABC transporter complex PstSACB involved in phosphate import. Responsible for energy coupling to the transport system. This chain is Phosphate import ATP-binding protein PstB, found in Hahella chejuensis (strain KCTC 2396).